A 161-amino-acid polypeptide reads, in one-letter code: Disulfide bond formation protein B (161 aa).

Residues 1–8 (MQANSRAY) lie on the Cytoplasmic side of the membrane. Residues 9–25 (FLLIALVSFGLVGVALY) traverse the membrane as a helical segment. Residues 26 to 43 (LQFEKGYQPCPLCVMQRF) lie on the Periplasmic side of the membrane. Residues C35 and C38 are joined by a disulfide bond. Residues 44–58 (AFIGIGIFSLLAAVA) traverse the membrane as a helical segment. The Cytoplasmic segment spans residues 59–63 (QNTRS). A helical membrane pass occupies residues 64 to 81 (LWQGLGMLSGIAGIAVAV). Residues 82–136 (YHVSLLLNPKASCGIDPLENWVNALPTAKALPQVFYADGLCTAPLPPVLGLSVPA) lie on the Periplasmic side of the membrane. C94 and C122 form a disulfide bridge. A helical membrane pass occupies residues 137–155 (WSLIWLFILTLTLAVGLIR). Residues 156-161 (REKNFR) are Cytoplasmic-facing.

This sequence belongs to the DsbB family.

It localises to the cell inner membrane. Its function is as follows. Required for disulfide bond formation in some periplasmic proteins. Acts by oxidizing the DsbA protein. This chain is Disulfide bond formation protein B, found in Cupriavidus necator (strain ATCC 17699 / DSM 428 / KCTC 22496 / NCIMB 10442 / H16 / Stanier 337) (Ralstonia eutropha).